The following is a 382-amino-acid chain: Anhydro-N-acetylmuramic acid kinase (382 aa).

An ATP-binding site is contributed by 22-29; it reads GTSMDGVD.

The protein belongs to the anhydro-N-acetylmuramic acid kinase family.

It carries out the reaction 1,6-anhydro-N-acetyl-beta-muramate + ATP + H2O = N-acetyl-D-muramate 6-phosphate + ADP + H(+). The protein operates within amino-sugar metabolism; 1,6-anhydro-N-acetylmuramate degradation. It functions in the pathway cell wall biogenesis; peptidoglycan recycling. Catalyzes the specific phosphorylation of 1,6-anhydro-N-acetylmuramic acid (anhMurNAc) with the simultaneous cleavage of the 1,6-anhydro ring, generating MurNAc-6-P. Is required for the utilization of anhMurNAc either imported from the medium or derived from its own cell wall murein, and thus plays a role in cell wall recycling. The polypeptide is Anhydro-N-acetylmuramic acid kinase (Burkholderia cenocepacia (strain ATCC BAA-245 / DSM 16553 / LMG 16656 / NCTC 13227 / J2315 / CF5610) (Burkholderia cepacia (strain J2315))).